The primary structure comprises 404 residues: Glucose-1-phosphate adenylyltransferase 2 (404 aa).

Alpha-D-glucose 1-phosphate is bound by residues tyrosine 97, glycine 162, 177–178 (EK), and serine 195.

This sequence belongs to the bacterial/plant glucose-1-phosphate adenylyltransferase family. Homotetramer.

It catalyses the reaction alpha-D-glucose 1-phosphate + ATP + H(+) = ADP-alpha-D-glucose + diphosphate. The protein operates within glycan biosynthesis; glycogen biosynthesis. Functionally, involved in the biosynthesis of ADP-glucose, a building block required for the elongation reactions to produce glycogen. Catalyzes the reaction between ATP and alpha-D-glucose 1-phosphate (G1P) to produce pyrophosphate and ADP-Glc. The polypeptide is Glucose-1-phosphate adenylyltransferase 2 (Vibrio vulnificus (strain CMCP6)).